We begin with the raw amino-acid sequence, 29 residues long: Small toxic protein ZorP (29 aa).

A helical transmembrane segment spans residues 10–27 (VLIAVLELLVALLRLIDL).

The protein resides in the membrane. Functionally, toxic component of a type I toxin-antitoxin (TA) system. Overexpression leads to cell stasis and a decrease in colony-forming units. Probably repressed by cognate small RNA orzP. Base pairing occurs between 18 bases in the 5' UTR of zorP mRNA and the 5' end of OrzP sRNA. The chain is Small toxic protein ZorP from Escherichia coli O157:H7.